The sequence spans 190 residues: Xanthine phosphoribosyltransferase (190 aa).

L20 and N27 together coordinate xanthine. A128 to A132 is a 5-phospho-alpha-D-ribose 1-diphosphate binding site. K156 contributes to the xanthine binding site.

Belongs to the purine/pyrimidine phosphoribosyltransferase family. Xpt subfamily. In terms of assembly, homodimer.

It is found in the cytoplasm. The enzyme catalyses XMP + diphosphate = xanthine + 5-phospho-alpha-D-ribose 1-diphosphate. It participates in purine metabolism; XMP biosynthesis via salvage pathway; XMP from xanthine: step 1/1. Converts the preformed base xanthine, a product of nucleic acid breakdown, to xanthosine 5'-monophosphate (XMP), so it can be reused for RNA or DNA synthesis. This chain is Xanthine phosphoribosyltransferase, found in Finegoldia magna (strain ATCC 29328 / DSM 20472 / WAL 2508) (Peptostreptococcus magnus).